Here is a 242-residue protein sequence, read N- to C-terminus: Probable transcriptional regulatory protein HEAR0561 (242 aa).

The protein belongs to the TACO1 family.

It is found in the cytoplasm. This Herminiimonas arsenicoxydans protein is Probable transcriptional regulatory protein HEAR0561.